Consider the following 37-residue polypeptide: Cytochrome b6-f complex subunit 5 (37 aa).

Residues 5 to 25 traverse the membrane as a helical segment; sequence LPSGIVLGLIPITLAGLFVTA.

It belongs to the PetG family. As to quaternary structure, the 4 large subunits of the cytochrome b6-f complex are cytochrome b6, subunit IV (17 kDa polypeptide, PetD), cytochrome f and the Rieske protein, while the 4 small subunits are PetG, PetL, PetM and PetN. The complex functions as a dimer.

The protein resides in the plastid. It localises to the chloroplast thylakoid membrane. Its function is as follows. Component of the cytochrome b6-f complex, which mediates electron transfer between photosystem II (PSII) and photosystem I (PSI), cyclic electron flow around PSI, and state transitions. PetG is required for either the stability or assembly of the cytochrome b6-f complex. The polypeptide is Cytochrome b6-f complex subunit 5 (Pinus thunbergii (Japanese black pine)).